A 780-amino-acid chain; its full sequence is Tricorn protease-interacting factor F3 (780 aa).

Residues glutamate 101 and 230-234 (GAMEN) contribute to the substrate site. Position 265 (histidine 265) interacts with Zn(2+). The Proton acceptor role is filled by glutamate 266. The Zn(2+) site is built by histidine 269 and glutamate 288.

The protein belongs to the peptidase M1 family. In terms of assembly, part of the tricorn proteolytic complex. Requires Zn(2+) as cofactor.

It is found in the cytoplasm. Functionally, proteases F1, F2 and F3 degrade oligopeptides produced by Tricorn (themselves probably produced by the proteasome), yielding free amino acids. In Thermoplasma acidophilum (strain ATCC 25905 / DSM 1728 / JCM 9062 / NBRC 15155 / AMRC-C165), this protein is Tricorn protease-interacting factor F3 (trf3).